A 626-amino-acid polypeptide reads, in one-letter code: Chaperone protein HtpG (626 aa).

The interval 1–341 (METKQFKAES…SEDLSLNISR (341 aa)) is a; substrate-binding. Positions 342–552 (EILQHDRQLK…EGELSIEMEK (211 aa)) are b. The segment at 490–509 (DLGIEGEEKENTSSSDDKEN) is disordered. The segment covering 498 to 509 (KENTSSSDDKEN) has biased composition (basic and acidic residues). A c region spans residues 553 to 626 (VLNAMPNNQN…FTNNICKIMK (74 aa)).

Belongs to the heat shock protein 90 family. In terms of assembly, homodimer.

Its subcellular location is the cytoplasm. Functionally, molecular chaperone. Has ATPase activity. The chain is Chaperone protein HtpG from Clostridium botulinum (strain Okra / Type B1).